Here is a 220-residue protein sequence, read N- to C-terminus: Dual specificity phosphatase 29 (220 aa).

Over residues 1 to 15 (MTSGEVKTSLKNAYS) the composition is skewed to polar residues. Positions 1–29 (MTSGEVKTSLKNAYSSAKRLSPKMEEEGE) are disordered. The 149-residue stretch at 54 to 202 (HVNEVWPKLY…LRELDKQLVQ (149 aa)) folds into the Tyrosine-protein phosphatase domain. Position 146–153 (146–153 (HCVMGRSR)) interacts with substrate. Cys-147 acts as the Phosphocysteine intermediate in catalysis.

Belongs to the protein-tyrosine phosphatase family. Non-receptor class dual specificity subfamily. Homodimer. Interacts with PRKAA2.

The protein localises to the cytoplasm. Its subcellular location is the nucleus. It catalyses the reaction O-phospho-L-tyrosyl-[protein] + H2O = L-tyrosyl-[protein] + phosphate. The catalysed reaction is O-phospho-L-seryl-[protein] + H2O = L-seryl-[protein] + phosphate. The enzyme catalyses O-phospho-L-threonyl-[protein] + H2O = L-threonyl-[protein] + phosphate. Functionally, dual specificity phosphatase able to dephosphorylate phosphotyrosine, phosphoserine and phosphothreonine residues within the same substrate, with a preference for phosphotyrosine as a substrate. Involved in the modulation of intracellular signaling cascades. In skeletal muscle regulates systemic glucose homeostasis by activating, AMPK, an energy sensor protein kinase. Affects MAP kinase signaling though modulation of the MAPK1/2 cascade in skeletal muscle promoting muscle cell differentiation, development and atrophy. This is Dual specificity phosphatase 29 from Homo sapiens (Human).